Here is a 122-residue protein sequence, read N- to C-terminus: Large ribosomal subunit protein bL12 (122 aa).

This sequence belongs to the bacterial ribosomal protein bL12 family. Homodimer. Part of the ribosomal stalk of the 50S ribosomal subunit. Forms a multimeric L10(L12)X complex, where L10 forms an elongated spine to which 2 to 4 L12 dimers bind in a sequential fashion. Binds GTP-bound translation factors.

Forms part of the ribosomal stalk which helps the ribosome interact with GTP-bound translation factors. Is thus essential for accurate translation. This Neisseria lactamica protein is Large ribosomal subunit protein bL12.